Reading from the N-terminus, the 63-residue chain is Alpha-conotoxin-like Am1.6 (63 aa).

The signal sequence occupies residues 1 to 21 (MGMRMMFTVFLLVVLATTVVS). The propeptide occupies 22-46 (FTSYRASDGRNAAAKASDLIALTVR). The segment at 50–52 (SRP) is ser-Xaa-Pro motif, crucial for potent interaction with nAChR.

It belongs to the conotoxin A superfamily. Post-translationally, is not hydroxylated. In terms of processing, contains 2 disulfide bonds. In terms of tissue distribution, expressed by the venom duct.

The protein localises to the secreted. Functionally, alpha-conotoxins act on postsynaptic membranes, they bind to the nicotinic acetylcholine receptors (nAChR) and thus inhibit them. The polypeptide is Alpha-conotoxin-like Am1.6 (Conus amadis (Amadis cone)).